The primary structure comprises 302 residues: MDLTALAGELQTGLKLQVLTNEPLSRHTTWRLGGPADLLARPRSREELDYCLSFARRKGLPLHILGNGSNLLVLDGGVRGLVVQTREWRQVIIEGRKILATAGTLLPGLLQVASKKGLGGLEFAAGIPATVGGAVVMNAGTPAGCLGDLVVGVEVLDYDGRRHILENREITFTYRHSSLHRAGTVVTVTLELVPDEVPAIRERIEANLHRRRSRQPLEWPNAGSVFKNPPGYYAGRLIEAVGAKGWRVGGAEVAEKHANFIINRGQATAADVMELIDRVREAVARQLGIDLELEIEVWGEGL.

Residues L32–D195 form the FAD-binding PCMH-type domain. R175 is a catalytic residue. The active-site Proton donor is the S224. E294 is a catalytic residue.

This sequence belongs to the MurB family. FAD is required as a cofactor.

Its subcellular location is the cytoplasm. It carries out the reaction UDP-N-acetyl-alpha-D-muramate + NADP(+) = UDP-N-acetyl-3-O-(1-carboxyvinyl)-alpha-D-glucosamine + NADPH + H(+). The protein operates within cell wall biogenesis; peptidoglycan biosynthesis. Cell wall formation. The chain is UDP-N-acetylenolpyruvoylglucosamine reductase from Moorella thermoacetica (strain ATCC 39073 / JCM 9320).